Here is a 197-residue protein sequence, read N- to C-terminus: uncharacterized protein (197 aa).

A helical membrane pass occupies residues Pro-7–Ile-27.

Belongs to the IIV-6 307L family.

Its subcellular location is the membrane. This is an uncharacterized protein from Acheta domesticus (House cricket).